Here is a 468-residue protein sequence, read N- to C-terminus: MQHGDRNTPGYREGIMSAVSLRRPSAPKGFALSVHVVTWNVASAAPTVDLSDLLQLNNQDLNLDIYIIGLQEMNFGIISLLSDAAFEDPWSSLFMDMLSPLNFVKISQVRMQGLLLLVFAKYQHLPYIQIISTKSTPTGLYGYWGNKGGVNVCLKLYGYYVSIINCHLPPHMYNNDQRLEHFDRILESLTFEGYDVPNILDHDLILWFGDMNFRIEDFGLLFVQESITRKYYKELWEKDQLFIAKKNDQLLREFQEGPLLFPPTYKFDRHSNNYDTSEKKRKPAWTDRILWRLKRQPSQASPLASSVPTSYFLLTLKNYVSHMAYSISDHKPVTGTFDLELNPLMSVPLITMMPEHLWTMENDMLISYTSTPEFLSSSWDWIGLYKVGMRHINDYVAYVWVGDNQVSYGNNPNQVYINISAIPDTEDQFLLCYYSNNLHSVVGISQPFKIPIRSFLREDTLYEPEPQI.

A catalytic region spans residues 34–337 (VHVVTWNVAS…SDHKPVTGTF (304 aa)). The tract at residues 318-448 (NYVSHMAYSI…HSVVGISQPF (131 aa)) is required for interaction with GPR78 and PAK1. Positions 340–468 (ELNPLMSVPL…DTLYEPEPQI (129 aa)) are required for ruffle localization.

The protein belongs to the inositol 1,4,5-trisphosphate 5-phosphatase type II family. As to quaternary structure, interacts with GPR78; necessary for INPP5K localization at the endoplasmic reticulum. Interacts with PAK1; competes with GPR78. Expressed in the skeletal muscle and the eye.

Its subcellular location is the endoplasmic reticulum. The protein resides in the cytoplasm. The catalysed reaction is 1D-myo-inositol 1,4,5-trisphosphate + H2O = 1D-myo-inositol 1,4-bisphosphate + phosphate. The enzyme catalyses 1,2-dioctanoyl-sn-glycero-3-phospho-(1D-myo-inositol-3,4,5-trisphosphate) + H2O = 1,2-dioctanoyl-sn-glycero-3-phospho-(1D-myo-inositol-3,4-bisphosphate) + phosphate. It catalyses the reaction 1D-myo-inositol 1,3,4,5-tetrakisphosphate + H2O = 1D-myo-inositol 1,3,4-trisphosphate + phosphate. It carries out the reaction a 1,2-diacyl-sn-glycero-3-phospho-(1D-myo-inositol-4,5-bisphosphate) + H2O = a 1,2-diacyl-sn-glycero-3-phospho-(1D-myo-inositol 4-phosphate) + phosphate. The catalysed reaction is a 1,2-diacyl-sn-glycero-3-phospho-(1D-myo-inositol-3,4,5-trisphosphate) + H2O = a 1,2-diacyl-sn-glycero-3-phospho-(1D-myo-inositol-3,4-bisphosphate) + phosphate. In terms of biological role, inositol 5-phosphatase which acts on inositol 1,4,5-trisphosphate, inositol 1,3,4,5-tetrakisphosphate, phosphatidylinositol 4,5-bisphosphate and phosphatidylinositol 3,4,5-trisphosphate. Has 6-fold higher affinity for phosphatidylinositol 4,5-bisphosphate than for inositol 1,4,5-trisphosphate. Negatively regulates assembly of the actin cytoskeleton. Controls insulin-dependent glucose uptake among inositol 3,4,5-trisphosphate phosphatases; therefore, is the specific regulator for insulin signaling in skeletal muscle. This is Inositol polyphosphate 5-phosphatase K from Mus musculus (Mouse).